A 179-amino-acid chain; its full sequence is Large ribosomal subunit protein uL6 (179 aa).

This sequence belongs to the universal ribosomal protein uL6 family. Part of the 50S ribosomal subunit.

Functionally, this protein binds to the 23S rRNA, and is important in its secondary structure. It is located near the subunit interface in the base of the L7/L12 stalk, and near the tRNA binding site of the peptidyltransferase center. In Prochlorococcus marinus (strain MIT 9312), this protein is Large ribosomal subunit protein uL6.